The sequence spans 202 residues: Superoxide dismutase [Fe] (202 aa).

The Fe cation site is built by H27, H82, D164, and H168.

The protein belongs to the iron/manganese superoxide dismutase family. As to quaternary structure, homodimer. Requires Fe cation as cofactor.

It catalyses the reaction 2 superoxide + 2 H(+) = H2O2 + O2. Its function is as follows. Destroys superoxide anion radicals which are normally produced within the cells and which are toxic to biological systems. The polypeptide is Superoxide dismutase [Fe] (sodA) (Enterococcus faecalis (strain ATCC 700802 / V583)).